A 156-amino-acid polypeptide reads, in one-letter code: Small ribosomal subunit protein uS7 (156 aa).

The protein belongs to the universal ribosomal protein uS7 family. Part of the 30S ribosomal subunit. Contacts proteins S9 and S11.

In terms of biological role, one of the primary rRNA binding proteins, it binds directly to 16S rRNA where it nucleates assembly of the head domain of the 30S subunit. Is located at the subunit interface close to the decoding center, probably blocks exit of the E-site tRNA. The polypeptide is Small ribosomal subunit protein uS7 (Renibacterium salmoninarum (strain ATCC 33209 / DSM 20767 / JCM 11484 / NBRC 15589 / NCIMB 2235)).